Reading from the N-terminus, the 345-residue chain is Polyprenyl transferase dpmpC (345 aa).

8 helical membrane passes run P24 to A44, G60 to V80, V101 to L121, L183 to W203, C220 to Y240, H261 to L281, S286 to I306, and L319 to L339.

Belongs to the UbiA prenyltransferase family. Mg(2+) is required as a cofactor.

The protein localises to the membrane. It functions in the pathway secondary metabolite biosynthesis; terpenoid biosynthesis. Polyprenyl transferase; part of the gene cluster that mediates the biosynthesis of diterpenoid pyrones. The first step of the pathway is the synthesis of the alpha-pyrone moiety by the polyketide synthase dpmpA via condensation of one acetyl-CoA starter unit with 3 malonyl-CoA units and 2 methylations. The alpha-pyrone is then combined with geranylgeranyl pyrophosphate (GGPP) formed by the GGPP synthase dpmpD through the action of the prenyltransferase dpmpC to yield a linear alpha-pyrone diterpenoid. Subsequent steps in the diterpenoid pyrone biosynthetic pathway involve the decalin core formation, which is initiated by the epoxidation of the C10-C11 olefin by the FAD-dependent oxidoreductase dpmpE, and is followed by a cyclization cascade catalyzed by the terpene cyclase dpmpB. The short chain dehydrogenase/reductase dpmpG then oxidizes the 8S hydroxy group to a ketone and the short chain dehydrogenase/reductase dpmpH reduces the ketone to the 8R hydroxy group to yield higginsianin B. Higginsianin B is further methylated by the methyltransferase dpmpI to produce the intermediate named FDDP B. The cytochrome P450 monooxygenase dpmpJ then oxidizes the C-26 methyl to primary alcohol, producing the final diterpenoid pyrone with a C-26 primary alcohol on the gamma-pyrone moiety named FDDP C. This chain is Polyprenyl transferase dpmpC, found in Macrophomina phaseolina (strain MS6) (Charcoal rot fungus).